A 729-amino-acid polypeptide reads, in one-letter code: FYN-binding protein 2 (729 aa).

Disordered regions lie at residues 18–130 (KFNA…EEKG), 170–320 (EGQK…SAEL), 371–408 (ELSP…PPKV), and 469–490 (VTKE…KTYD). Composition is skewed to polar residues over residues 69-81 (GVSQ…TLKS), 89-99 (KTSSSSGTPEK), 190-216 (GAQT…SSVS), and 226-240 (KSPA…SQCQ). Residues 275–284 (GPPPPKPSKP) show a composition bias toward pro residues. Over residues 374-402 (PRPKEEENTMEEKESWESEPLEPRKELHP) the composition is skewed to basic and acidic residues. Positions 473–485 (TPSPSTIRSSSSS) are enriched in low complexity. Position 489 is a phosphotyrosine (Tyr-489). Positions 520 to 523 (YEDI) match the SH2-binding; to LCP2 motif. Positions 576–603 (DLGPRSQDDSQDGIIYDDVDTREKESND) are disordered. A compositionally biased stretch (acidic residues) spans 584 to 593 (DSQDGIIYDD). Tyr-591 is modified (phosphotyrosine). A compositionally biased stretch (basic and acidic residues) spans 594–603 (VDTREKESND). The SH3 domain maps to 668-728 (LVINRAVACA…LVEHLDFKHQ (61 aa)).

As to quaternary structure, interacts with SKAP1, LCK and FYN. The phosphorylated form interacts with LCP2. In terms of processing, phosphorylation is required for its function in T-cell activation.

The protein localises to the membrane raft. Adapter protein that plays a role in T-cell receptor (TCR)-mediated activation of signaling pathways. Required for T-cell activation and integrin-mediated T-cell adhesion in response to TCR stimulation. The chain is FYN-binding protein 2 from Mus musculus (Mouse).